Here is a 37-residue protein sequence, read N- to C-terminus: Large ribosomal subunit protein bL36 (37 aa).

The protein belongs to the bacterial ribosomal protein bL36 family.

This Syntrophomonas wolfei subsp. wolfei (strain DSM 2245B / Goettingen) protein is Large ribosomal subunit protein bL36.